Here is a 332-residue protein sequence, read N- to C-terminus: Glycerol-3-phosphate dehydrogenase [NAD(P)+] (332 aa).

5 residues coordinate NADPH: serine 11, tryptophan 12, arginine 32, arginine 33, and lysine 106. Lysine 106 and glycine 136 together coordinate sn-glycerol 3-phosphate. Alanine 140 contributes to the NADPH binding site. The sn-glycerol 3-phosphate site is built by lysine 191, aspartate 244, serine 254, arginine 255, and asparagine 256. Lysine 191 serves as the catalytic Proton acceptor. Arginine 255 provides a ligand contact to NADPH. The NADPH site is built by valine 280 and glutamate 282.

The protein belongs to the NAD-dependent glycerol-3-phosphate dehydrogenase family.

The protein localises to the cytoplasm. The enzyme catalyses sn-glycerol 3-phosphate + NAD(+) = dihydroxyacetone phosphate + NADH + H(+). It catalyses the reaction sn-glycerol 3-phosphate + NADP(+) = dihydroxyacetone phosphate + NADPH + H(+). It functions in the pathway membrane lipid metabolism; glycerophospholipid metabolism. In terms of biological role, catalyzes the reduction of the glycolytic intermediate dihydroxyacetone phosphate (DHAP) to sn-glycerol 3-phosphate (G3P), the key precursor for phospholipid synthesis. This Corynebacterium urealyticum (strain ATCC 43042 / DSM 7109) protein is Glycerol-3-phosphate dehydrogenase [NAD(P)+].